A 1124-amino-acid chain; its full sequence is Putative DNA mismatch repair protein mutS homolog L359 (1124 aa).

779 to 786 (SNNWAGKS) contributes to the ATP binding site.

Belongs to the DNA mismatch repair MutS family.

May be involved in DNA-mismatch repair. This is Putative DNA mismatch repair protein mutS homolog L359 from Acanthamoeba polyphaga (Amoeba).